Reading from the N-terminus, the 324-residue chain is MTSVDCTAYGPELRALAARLPRTPRADLYAFLDAAHTAAASLPGALATALDTFNAEGSEDGHLLLRGLPVEADADLPTTPSSTPAPEDRSLLTMEAMLGLVGRRLGLHTGYRELRSGTVYHDVYPSPGAHHLSSETSETLLEFHTEMAYHRLQPNYVMLACSRADHERTAATLVASVRKALPLLDERTRARLLDRRMPCCVDVAFRGGVDDPGAIAQVKPLYGDADDPFLGYDRELLAPEDPADKEAVAALSKALDEVTEAVYLEPGDLLIVDNFRTTHARTPFSPRWDGKDRWLHRVYIRTDRNGQLSGGERAGDVVAFTPRG.

The Fe cation site is built by His144, Glu146, and His279. Residue Arg293 coordinates 2-oxoglutarate.

Belongs to the clavaminate synthase family. Requires Fe(2+) as cofactor.

It catalyses the reaction deoxyamidinoproclavaminate + 2-oxoglutarate + O2 = amidinoproclavaminate + succinate + CO2. The enzyme catalyses proclavaminate + 2-oxoglutarate + O2 = dihydroclavaminate + succinate + CO2 + H2O. It carries out the reaction dihydroclavaminate + 2-oxoglutarate + O2 = clavaminate + succinate + CO2 + H2O. It participates in antibiotic biosynthesis; clavulanate biosynthesis; clavulanate from D-glyceraldehyde 3-phosphate and L-arginine: step 3/8. It functions in the pathway antibiotic biosynthesis; clavulanate biosynthesis; clavulanate from D-glyceraldehyde 3-phosphate and L-arginine: step 5/8. Its pathway is antibiotic biosynthesis; clavulanate biosynthesis; clavulanate from D-glyceraldehyde 3-phosphate and L-arginine: step 6/8. This is Clavaminate synthase 1 (cs1) from Streptomyces clavuligerus.